Reading from the N-terminus, the 78-residue chain is MKLTCMMIVAVLFLTAWTFVTADDSRNGLKNLFPKARHEMKNPEASKLNKRYGCSNAGAFCGIHPGLCCSELCLVWCT.

The signal sequence occupies residues 1–22 (MKLTCMMIVAVLFLTAWTFVTA). Positions 23–49 (DDSRNGLKNLFPKARHEMKNPEASKLN) are excised as a propeptide. 3 disulfide bridges follow: Cys54-Cys69, Cys61-Cys73, and Cys68-Cys77. Pro65 carries the post-translational modification 4-hydroxyproline.

It belongs to the conotoxin O1 superfamily. Expressed by the venom duct.

It is found in the secreted. Delta-conotoxins bind to site 6 of voltage-gated sodium channels (Nav) and inhibit the inactivation process. The sequence is that of Delta-conotoxin-like CVIE from Conus catus (Cat cone).